Reading from the N-terminus, the 253-residue chain is 1-(5-phosphoribosyl)-5-[(5-phosphoribosylamino)methylideneamino] imidazole-4-carboxamide isomerase (253 aa).

The active-site Proton acceptor is the aspartate 19. Residue aspartate 141 is the Proton donor of the active site.

It belongs to the HisA/HisF family.

It is found in the cytoplasm. The enzyme catalyses 1-(5-phospho-beta-D-ribosyl)-5-[(5-phospho-beta-D-ribosylamino)methylideneamino]imidazole-4-carboxamide = 5-[(5-phospho-1-deoxy-D-ribulos-1-ylimino)methylamino]-1-(5-phospho-beta-D-ribosyl)imidazole-4-carboxamide. Its pathway is amino-acid biosynthesis; L-histidine biosynthesis; L-histidine from 5-phospho-alpha-D-ribose 1-diphosphate: step 4/9. In Rhodopirellula baltica (strain DSM 10527 / NCIMB 13988 / SH1), this protein is 1-(5-phosphoribosyl)-5-[(5-phosphoribosylamino)methylideneamino] imidazole-4-carboxamide isomerase.